Here is a 495-residue protein sequence, read N- to C-terminus: Mesoderm induction early response protein 1 (495 aa).

Disordered regions lie at residues M1 to S25 and G76 to T131. Residues G83–N94 show a composition bias toward acidic residues. Residues Q120–F130 are compositionally biased toward polar residues. In terms of domain architecture, ELM2 spans K171–V269. Positions E274 to R326 constitute an SANT domain. 2 disordered regions span residues D356–S397 and H416–V495. Composition is skewed to polar residues over residues T387–S397 and P420–E440. Residues T462–G476 show a composition bias toward basic and acidic residues. A compositionally biased stretch (polar residues) spans K477–V489.

The protein localises to the nucleus. Transcriptional repressor regulating the expression of a number of genes. Probably functions through recruitment of histone deacetylases involved in chromatin silencing. The polypeptide is Mesoderm induction early response protein 1 (mier1) (Xenopus laevis (African clawed frog)).